A 297-amino-acid chain; its full sequence is Lymphocyte antigen 6 complex locus protein G6f (297 aa).

The signal sequence occupies residues 1-16 (MAVLFLLLFLCGTPQA). The Ig-like V-type domain occupies 17–122 (ADNMQAIYVA…HNYQNWRVYD (106 aa)). Over 17 to 235 (ADNMQAIYVA…APSTGWDMPW (219 aa)) the chain is Extracellular. C35 and C106 are disulfide-bonded. Residue N88 is glycosylated (N-linked (GlcNAc...) asparagine). Residues 236–256 (ILMLLLTMGQGVVILALSIVL) form a helical membrane-spanning segment. Topologically, residues 257 to 297 (WRQRVRGAPGRDASIPQFKPEIQVYENIHLARLGPPAHKPR) are cytoplasmic. A Phosphotyrosine modification is found at Y281.

In terms of assembly, homodimer; disulfide-linked. Interacts with GRB2 and GRB7 in a phosphorylation-dependent manner. In terms of processing, N-glycosylated.

The protein resides in the cell membrane. Its function is as follows. May play a role in the downstream signal transduction pathways involving GRB2 and GRB7. The sequence is that of Lymphocyte antigen 6 complex locus protein G6f (LY6G6F) from Homo sapiens (Human).